A 347-amino-acid chain; its full sequence is Phosphoribosylformylglycinamidine cyclo-ligase (347 aa).

The protein belongs to the AIR synthase family.

It is found in the cytoplasm. The catalysed reaction is 2-formamido-N(1)-(5-O-phospho-beta-D-ribosyl)acetamidine + ATP = 5-amino-1-(5-phospho-beta-D-ribosyl)imidazole + ADP + phosphate + H(+). It participates in purine metabolism; IMP biosynthesis via de novo pathway; 5-amino-1-(5-phospho-D-ribosyl)imidazole from N(2)-formyl-N(1)-(5-phospho-D-ribosyl)glycinamide: step 2/2. The protein is Phosphoribosylformylglycinamidine cyclo-ligase of Yersinia pseudotuberculosis serotype O:1b (strain IP 31758).